The chain runs to 671 residues: MAKKTKAEDPKKRIITLRKEIGRHNDLYYKENAPVITDKEFDILVKELQKLESENPDLADVSSPTAQVGSDLSPQFSKFKHKVPVLSLENTYNETELSEWLEKTGIEENYSLEWKIDGASILLYYEKGKLTNCVTRGSGGIGDVVTENVKTISTIPHTLSEEMNLTVRGEIFMTFADFEEFNEEYGGKFANPRNLAAGSIKQKDPLDVAKRPLRIYVYDVYFSSSRKGINTHKDILSLLKKEKFPLAPDTTILTGKKLLREIESFRKKKDKMPFPVDGLVIKLDSLNLRESLGETSHSPRWARAFKFDALLKESTIEEIDFAIGRTGKVTPRAKVTPISLAGTTVTYATLHNQDYINQLGAGIGAKVLISKRGEIIPAVEKVTFPPKTIFVLPNQCPSCNTKLTKVDDSVDFFCTNRHCPERKLNQLIFFCSKKQMNIEGLGERQIQIFFEKGWVKDIPDLYTLEKYKPTLLELDGFGEKSVKIIFDAIEKSKEKDFRFTLPSIGLNEVGPKVTEILIENGYDSWDKLLTLSKSKTANEDLKAIHGIGPRTIEALLTHLKDKETLKLVATLKKLGLKFQADETEKSDLQPFVGQSWCVTGSFENFQPRDLAMDLITKHGGKKVTSVSSKTTHLLYGPGAGSKLDKATELGVKLVTESEFLDLLKQEGIAID.

Residues 38 to 42 (DKEFD), 87 to 88 (SL), and Glu113 contribute to the NAD(+) site. Catalysis depends on Lys115, which acts as the N6-AMP-lysine intermediate. The NAD(+) site is built by Arg136, Glu170, Lys282, and Lys306. Residues Cys396, Cys399, Cys414, and Cys419 each contribute to the Zn(2+) site. Positions 586-671 (SDLQPFVGQS…LLKQEGIAID (86 aa)) constitute a BRCT domain.

Belongs to the NAD-dependent DNA ligase family. LigA subfamily. The cofactor is Mg(2+). Mn(2+) serves as cofactor.

It carries out the reaction NAD(+) + (deoxyribonucleotide)n-3'-hydroxyl + 5'-phospho-(deoxyribonucleotide)m = (deoxyribonucleotide)n+m + AMP + beta-nicotinamide D-nucleotide.. Functionally, DNA ligase that catalyzes the formation of phosphodiester linkages between 5'-phosphoryl and 3'-hydroxyl groups in double-stranded DNA using NAD as a coenzyme and as the energy source for the reaction. It is essential for DNA replication and repair of damaged DNA. The chain is DNA ligase from Leptospira biflexa serovar Patoc (strain Patoc 1 / Ames).